Consider the following 201-residue polypeptide: Large ribosomal subunit protein uL4 (201 aa).

The tract at residues 44–73 is disordered; the sequence is RAQKSRAEVKASRKKPWRQKGTGRARAGSV. The span at 55 to 66 shows a compositional bias: basic residues; the sequence is SRKKPWRQKGTG.

It belongs to the universal ribosomal protein uL4 family. Part of the 50S ribosomal subunit.

One of the primary rRNA binding proteins, this protein initially binds near the 5'-end of the 23S rRNA. It is important during the early stages of 50S assembly. It makes multiple contacts with different domains of the 23S rRNA in the assembled 50S subunit and ribosome. Its function is as follows. Forms part of the polypeptide exit tunnel. This chain is Large ribosomal subunit protein uL4, found in Hamiltonella defensa subsp. Acyrthosiphon pisum (strain 5AT).